A 411-amino-acid polypeptide reads, in one-letter code: tRNA pseudouridine synthase Pus10 (411 aa).

One can recognise a THUMP domain in the interval 65–192; it reads ALAKCHLPTR…SGQVKVVRNP (128 aa). D244 (nucleophile) is an active-site residue. Y305 and Y376 together coordinate substrate.

This sequence belongs to the pseudouridine synthase Pus10 family.

The enzyme catalyses uridine(54) in tRNA = pseudouridine(54) in tRNA. It catalyses the reaction uridine(55) in tRNA = pseudouridine(55) in tRNA. Functionally, responsible for synthesis of pseudouridine from uracil-54 and uracil-55 in the psi GC loop of transfer RNAs. This Pyrobaculum arsenaticum (strain DSM 13514 / JCM 11321 / PZ6) protein is tRNA pseudouridine synthase Pus10.